The following is an 877-amino-acid chain: MKKRIDYLSNKQNKYSIRRFTVGTTSVIVGATILFGIGNHQAQASEQSNDTTQSSKNNASADSEKNNMIETPQLNTTANDTSDISANTNSANVDSTTKPMSTQTSNTTTTEPASTNETPQPTAIKNQATAAKMQDQTVPQEANSQVDNKTTNDANSIATNSELKNSQTLDLPQSSPQTISNAQGTSKPSVRTRAVRSLAVAEPVVNAADAKGTNVNDKVTASNFKLEKTTFDPNQSGNTFMAANFTVTDKVKSGDYFTAKLPDSLTGNGDVDYSNSNNTMPIADIKSTNGDVVAKATYDILTKTYTFVFTDYVNNKENINGQFSLPLFTDRAKAPKSGTYDANINIADEMFNNKITYNYSSPIAGIDKPNGANISSQIIGVDTASGQNTYKQTVFVNPKQRVLGNTWVYIKGYQDKIEESSGKVSATDTKLRIFEVNDTSKLSDSYYADPNDSNLKEVTDQFKNRIYYEHPNVASIKFGDITKTYVVLVEGHYDNTGKNLKTQVIQENVDPVTNRDYSIFGWNNENVVRYGGGSADGDSAVNPKDPTPGPPVDPEPSPDPEPEPTPDPEPSPDPEPEPSPDPDPDSDSDSDSGSDSDSGSDSDSESDSDSDSDSDSDSDSDSESDSDSESDSESDSDSDSDSDSDSDSDSDSDSDSDSDSDSDSDSDSDSDSDSDSDSDSDSDSDSDSDSDSDSDSDSDSDSDSDSDSDSDSDSDSDSDSDSDSDSDSDSDSDSDSDSDSDSDSDSDSDSDSDSDSDSDSDSDSDSDSDSDSDSDSDSDSDSDSDSDSDSDSDSDSDSDSDSDSRVTPPNNEQKAPSNPKGEVNHSNKVSKQHKTDALPETGDKSENTNATLFGAMMALLGSLLLFRKRKQDHKEKA.

A signal peptide spans 1–44; the sequence is MKKRIDYLSNKQNKYSIRRFTVGTTSVIVGATILFGIGNHQAQA. Residues 15 to 26 carry the YSIRK-G/S signaling motif motif; sequence YSIRRFTVGTTS. 2 stretches are compositionally biased toward polar residues: residues 44–61 and 68–95; these read ASEQSNDTTQSSKNNASA and MIETPQLNTTANDTSDISANTNSANVDS. The interval 44-192 is disordered; sequence ASEQSNDTTQ…QGTSKPSVRT (149 aa). Residues 45–542 are ligand binding A region; it reads SEQSNDTTQS…GSADGDSAVN (498 aa). Positions 96–119 are enriched in low complexity; the sequence is TTKPMSTQTSNTTTTEPASTNETP. A compositionally biased stretch (polar residues) spans 120-189; sequence QPTAIKNQAT…SNAQGTSKPS (70 aa). The MIDAS-like motif motif lies at 272 to 276; the sequence is DYSNS. The segment at 530–849 is disordered; sequence YGGGSADGDS…ETGDKSENTN (320 aa). The span at 545-555 shows a compositional bias: pro residues; that stretch reads DPTPGPPVDPE. Residues 556–801 are compositionally biased toward acidic residues; that stretch reads PSPDPEPEPT…SDSDSDSDSD (246 aa). Positions 805 to 816 are enriched in polar residues; sequence RVTPPNNEQKAP. A compositionally biased stretch (basic and acidic residues) spans 833–846; the sequence is HKTDALPETGDKSE. Positions 838 to 842 match the LPXTG sorting signal motif; that stretch reads LPETG. A Pentaglycyl murein peptidoglycan amidated threonine modification is found at threonine 841. The propeptide at 842-877 is removed by sortase; the sequence is GDKSENTNATLFGAMMALLGSLLLFRKRKQDHKEKA.

It belongs to the serine-aspartate repeat-containing protein (SDr) family. Proteolytically cleaved by aureolysin (aur). This cleavage leads to the inactivation of ClfB.

It is found in the secreted. The protein resides in the cell wall. Its function is as follows. Cell surface-associated protein implicated in virulence by promoting bacterial attachment to both alpha- and beta-chains of human fibrinogen and inducing the formation of bacterial clumps. Partly responsible for mediating bacterial attachment to the highly keratinized squamous epithelial cells from the nasal cavity via an interaction with cytokeratin K10 (K10). Also promotes bacterial attachment to cultured keratinocytes, possibly through an interaction with cytokeratin K10. Binds mouse cytokeratin K10. Activates human platelet aggregation. The polypeptide is Clumping factor B (clfB) (Staphylococcus aureus (strain NCTC 8325 / PS 47)).